The primary structure comprises 442 residues: MHIGQALDLVSRYDSLRNPLTSLGDYLDPELISRCLAESGTVTLRKRRLPLEMMVWCIVGMALERKEPLHQIVNRLDIMLPGNRPFVAPSAVIQARQRLGSEAVRRVFTKTAQLWHNATPHPHWCGLTLLAIDGVFWRTPDTPENDAAFPRQTHAGNPALYPQVKMVCQMELTSHLLTAAAFGTMKNSENELAEQLIEQTGDNTLTLMDKGYYSLGLLNAWSLAGEHRHWMIPLRKGAQYEEIRKLGKGDHLVKLKTSPQARKKWPGLGNEVTARLLTVTRKGKVCHLLTSMTDAMRFPGGEMGDLYSHRWEIELGYREIKQTMQRSRLTLRSKKPELVEQELWGVLLAYNLVRYQMIKMAEHLKGYWPNQLSFSESCGMVMRMLMTLQGASPGRIPELMRDLASMGQLVKLPTRRERAFPRVVKERPWKYPTAPKKSQSVA.

The protein belongs to the transposase 11 family.

Its function is as follows. Involved in the transposition of the insertion sequence IS4. This is Transposase InsG for insertion sequence element IS4 (insG) from Escherichia coli (strain K12).